The chain runs to 248 residues: Pyridoxine 5'-phosphate synthase (248 aa).

A 3-amino-2-oxopropyl phosphate-binding site is contributed by asparagine 10. 12-13 is a 1-deoxy-D-xylulose 5-phosphate binding site; that stretch reads DH. Arginine 21 contacts 3-amino-2-oxopropyl phosphate. Histidine 46 serves as the catalytic Proton acceptor. 1-deoxy-D-xylulose 5-phosphate is bound by residues arginine 48 and histidine 53. Residue glutamate 73 is the Proton acceptor of the active site. A 1-deoxy-D-xylulose 5-phosphate-binding site is contributed by threonine 103. Histidine 194 acts as the Proton donor in catalysis. 3-amino-2-oxopropyl phosphate-binding positions include glycine 195 and 216-217; that span reads GH.

Belongs to the PNP synthase family. Homooctamer; tetramer of dimers.

The protein resides in the cytoplasm. The catalysed reaction is 3-amino-2-oxopropyl phosphate + 1-deoxy-D-xylulose 5-phosphate = pyridoxine 5'-phosphate + phosphate + 2 H2O + H(+). The protein operates within cofactor biosynthesis; pyridoxine 5'-phosphate biosynthesis; pyridoxine 5'-phosphate from D-erythrose 4-phosphate: step 5/5. Functionally, catalyzes the complicated ring closure reaction between the two acyclic compounds 1-deoxy-D-xylulose-5-phosphate (DXP) and 3-amino-2-oxopropyl phosphate (1-amino-acetone-3-phosphate or AAP) to form pyridoxine 5'-phosphate (PNP) and inorganic phosphate. In Legionella pneumophila (strain Lens), this protein is Pyridoxine 5'-phosphate synthase.